A 457-amino-acid polypeptide reads, in one-letter code: NADH-ubiquinone oxidoreductase chain 4 (457 aa).

12 helical membrane-spanning segments follow: residues 22–42 (NLWPVTILQSAFLSIAAIALI), 59–79 (SMQLPLLVLSCWLTPLALIAS), 95–115 (IVLVIIITTSLIITFSSLELI), 116–136 (LFYIAFETTLVPTLILITRWG), 148–168 (FIFYTLFGSLPLLISLIALYF), 191–211 (LTVWWLLSILAFLVKMPIYGF), 223–243 (PVAGSMILAAILLKLGGYGLM), 257–277 (SSLPLVVFCCWGALVTSIICI), 282–302 (LKALIAYSSVGHMSIVAAGVF), 309–329 (INGALMLMIAHGLVSSALFAL), 350–370 (LILPLSTFWWLIMCAANLGFP), and 433–453 (LFLLHLLPLLLIIPTPNLVLI).

This sequence belongs to the complex I subunit 4 family.

It is found in the mitochondrion membrane. The catalysed reaction is a ubiquinone + NADH + 5 H(+)(in) = a ubiquinol + NAD(+) + 4 H(+)(out). Core subunit of the mitochondrial membrane respiratory chain NADH dehydrogenase (Complex I) that is believed to belong to the minimal assembly required for catalysis. Complex I functions in the transfer of electrons from NADH to the respiratory chain. The immediate electron acceptor for the enzyme is believed to be ubiquinone. This Arbacia lixula (Black urchin) protein is NADH-ubiquinone oxidoreductase chain 4 (ND4).